A 513-amino-acid chain; its full sequence is Ribonuclease Y (513 aa).

Residues asparagine 4–leucine 24 traverse the membrane as a helical segment. The KH domain maps to threonine 203–leucine 266. In terms of domain architecture, HD spans valine 329–alanine 422.

The protein belongs to the RNase Y family.

It localises to the cell membrane. Functionally, endoribonuclease that initiates mRNA decay. The sequence is that of Ribonuclease Y from Desulforudis audaxviator (strain MP104C).